The sequence spans 1072 residues: Carbamoyl phosphate synthase large chain (1072 aa).

A carboxyphosphate synthetic domain region spans residues 1 to 401 (MPKYKDINKV…SLLKAVRSLE (401 aa)). Arg129, Arg169, Gly175, Gly176, Lys208, Leu210, Glu215, Gly241, Val242, His243, Gln284, and Glu298 together coordinate ATP. Positions 133 to 327 (KRKMQEIGEP…IAKIAAKIAI (195 aa)) constitute an ATP-grasp 1 domain. Mg(2+)-binding residues include Gln284, Glu298, and Asn300. The Mn(2+) site is built by Gln284, Glu298, and Asn300. Residues 402–544 (IKAYGLRLNN…YIYSTYGEED (143 aa)) form an oligomerization domain region. Positions 545–929 (EVEIHDMPKV…ALYKALEGAG (385 aa)) are carbamoyl phosphate synthetic domain. Residues 671 to 861 (SKLLRELNIN…MVKLAVEVAL (191 aa)) form the ATP-grasp 2 domain. ATP is bound by residues Arg707, Lys746, Ile748, Glu752, Gly777, Val778, His779, Ser780, Gln820, and Glu832. Gln820, Glu832, and Asn834 together coordinate Mg(2+). The Mn(2+) site is built by Gln820, Glu832, and Asn834. Residues 930–1072 (LKIPKKGKIL…QKDNVKNLVL (143 aa)) form the MGS-like domain. The interval 930–1072 (LKIPKKGKIL…QKDNVKNLVL (143 aa)) is allosteric domain.

This sequence belongs to the CarB family. In terms of assembly, composed of two chains; the small (or glutamine) chain promotes the hydrolysis of glutamine to ammonia, which is used by the large (or ammonia) chain to synthesize carbamoyl phosphate. Tetramer of heterodimers (alpha,beta)4. The cofactor is Mg(2+). It depends on Mn(2+) as a cofactor.

The enzyme catalyses hydrogencarbonate + L-glutamine + 2 ATP + H2O = carbamoyl phosphate + L-glutamate + 2 ADP + phosphate + 2 H(+). The catalysed reaction is hydrogencarbonate + NH4(+) + 2 ATP = carbamoyl phosphate + 2 ADP + phosphate + 2 H(+). It participates in amino-acid biosynthesis; L-arginine biosynthesis; carbamoyl phosphate from bicarbonate: step 1/1. Its pathway is pyrimidine metabolism; UMP biosynthesis via de novo pathway; (S)-dihydroorotate from bicarbonate: step 1/3. Its function is as follows. Large subunit of the glutamine-dependent carbamoyl phosphate synthetase (CPSase). CPSase catalyzes the formation of carbamoyl phosphate from the ammonia moiety of glutamine, carbonate, and phosphate donated by ATP, constituting the first step of 2 biosynthetic pathways, one leading to arginine and/or urea and the other to pyrimidine nucleotides. The large subunit (synthetase) binds the substrates ammonia (free or transferred from glutamine from the small subunit), hydrogencarbonate and ATP and carries out an ATP-coupled ligase reaction, activating hydrogencarbonate by forming carboxy phosphate which reacts with ammonia to form carbamoyl phosphate. This chain is Carbamoyl phosphate synthase large chain, found in Thermoanaerobacter pseudethanolicus (strain ATCC 33223 / 39E) (Clostridium thermohydrosulfuricum).